An 842-amino-acid polypeptide reads, in one-letter code: Histidine biosynthesis trifunctional protein (842 aa).

The tract at residues 1-275 (MTFPLLPAYA…FVVEQTGVGF (275 aa)) is phosphoribosyl-AMP cyclohydrolase. The phosphoribosyl-ATP pyrophosphohydrolase stretch occupies residues 276-357 (CHLERTSCFG…FYFALVRCAK (82 aa)). The segment at 358-842 (YGVTLDEVER…KVRMEKLGLI (485 aa)) is histidinol dehydrogenase. A disordered region spans residues 380–403 (KGDAKPGYTKEQPKEESKPKEVPS). Positions 390 to 403 (EQPKEESKPKEVPS) are enriched in basic and acidic residues. Residues glutamine 667 and histidine 670 each coordinate Zn(2+). Residues glutamate 736 and histidine 737 contribute to the active site. Aspartate 769 and histidine 828 together coordinate Zn(2+).

This sequence in the C-terminal section; belongs to the histidinol dehydrogenase family. Zn(2+) serves as cofactor.

It catalyses the reaction 1-(5-phospho-beta-D-ribosyl)-5'-AMP + H2O = 1-(5-phospho-beta-D-ribosyl)-5-[(5-phospho-beta-D-ribosylamino)methylideneamino]imidazole-4-carboxamide. It carries out the reaction 1-(5-phospho-beta-D-ribosyl)-ATP + H2O = 1-(5-phospho-beta-D-ribosyl)-5'-AMP + diphosphate + H(+). The enzyme catalyses L-histidinol + 2 NAD(+) + H2O = L-histidine + 2 NADH + 3 H(+). The protein operates within amino-acid biosynthesis; L-histidine biosynthesis; L-histidine from 5-phospho-alpha-D-ribose 1-diphosphate: step 2/9. Its pathway is amino-acid biosynthesis; L-histidine biosynthesis; L-histidine from 5-phospho-alpha-D-ribose 1-diphosphate: step 3/9. It participates in amino-acid biosynthesis; L-histidine biosynthesis; L-histidine from 5-phospho-alpha-D-ribose 1-diphosphate: step 9/9. The chain is Histidine biosynthesis trifunctional protein (HIS4) from Komagataella pastoris (Yeast).